The following is a 571-amino-acid chain: Proline--tRNA ligase (571 aa).

This sequence belongs to the class-II aminoacyl-tRNA synthetase family. ProS type 1 subfamily. As to quaternary structure, homodimer.

The protein resides in the cytoplasm. It catalyses the reaction tRNA(Pro) + L-proline + ATP = L-prolyl-tRNA(Pro) + AMP + diphosphate. Functionally, catalyzes the attachment of proline to tRNA(Pro) in a two-step reaction: proline is first activated by ATP to form Pro-AMP and then transferred to the acceptor end of tRNA(Pro). As ProRS can inadvertently accommodate and process non-cognate amino acids such as alanine and cysteine, to avoid such errors it has two additional distinct editing activities against alanine. One activity is designated as 'pretransfer' editing and involves the tRNA(Pro)-independent hydrolysis of activated Ala-AMP. The other activity is designated 'posttransfer' editing and involves deacylation of mischarged Ala-tRNA(Pro). The misacylated Cys-tRNA(Pro) is not edited by ProRS. The protein is Proline--tRNA ligase of Pseudomonas putida (strain GB-1).